We begin with the raw amino-acid sequence, 346 residues long: Methylthioribose-1-phosphate isomerase (346 aa).

Substrate contacts are provided by residues 50-52 (RGA), Arg-93, and Gln-196. Asp-237 serves as the catalytic Proton donor. 247–248 (NK) contacts substrate.

Belongs to the eIF-2B alpha/beta/delta subunits family. MtnA subfamily.

The enzyme catalyses 5-(methylsulfanyl)-alpha-D-ribose 1-phosphate = 5-(methylsulfanyl)-D-ribulose 1-phosphate. Its pathway is amino-acid biosynthesis; L-methionine biosynthesis via salvage pathway; L-methionine from S-methyl-5-thio-alpha-D-ribose 1-phosphate: step 1/6. Its function is as follows. Catalyzes the interconversion of methylthioribose-1-phosphate (MTR-1-P) into methylthioribulose-1-phosphate (MTRu-1-P). The protein is Methylthioribose-1-phosphate isomerase of Alkalilimnicola ehrlichii (strain ATCC BAA-1101 / DSM 17681 / MLHE-1).